Reading from the N-terminus, the 128-residue chain is Gastrotropin (128 aa).

N-acetylalanine is present on A2.

This sequence belongs to the calycin superfamily. Fatty-acid binding protein (FABP) family. Expressed in ovary granulosa and luteal cells.

The protein localises to the cytoplasm. Its subcellular location is the membrane. Functionally, binds to bile acids and is involved in enterohepatic bile acid metabolism. Required for efficient apical to basolateral transport of conjugated bile acids in ileal enterocytes. Stimulates gastric acid and pepsinogen secretion. The chain is Gastrotropin (Fabp6) from Mus musculus (Mouse).